A 172-amino-acid polypeptide reads, in one-letter code: MMCYDNSEMLSRLIDVMANDKPLMLTSPKQRQGSRFEQRACEFLQERGLILVAQNWQQPKVGELDLVMLEKGQAWSTLVFVEVRQRQHSYFGDAAISVTAGKQRKIIKAARHFLQQNPQYHKYECRFDVIAYNTMNKKNKNEANITLDNQPNQRLEINQPEWLQGAFITSAW.

Belongs to the UPF0102 family.

The chain is UPF0102 protein Pcryo_2198 from Psychrobacter cryohalolentis (strain ATCC BAA-1226 / DSM 17306 / VKM B-2378 / K5).